A 133-amino-acid chain; its full sequence is Lanmodulin (133 aa).

A signal peptide spans 1-21; that stretch reads MAFRLSSAVLLAALVAAPAYA. Residues D35, D37, D39, T41, E46, D59, D61, D63, T65, E70, D84, D86, D88, T90, E95, N108, D110, D112, T114, and E119 each coordinate Nd(3+). EF-hand domains lie at 35-46, 59-70, 84-95, and 108-119; these read DPDKDGTIDLKE, DPDKDGTLDAKE, DPDNDGTLDKKE, and NPDNDGTIDARE.

Monomer.

It localises to the periplasm. Its function is as follows. High-affinity lanthanide (Ln)-binding protein. Shows 100 million-fold selectivity for La(3+) over Ca(2+). Binds 3 equiv of Ln(3+) with picomolar affinity and a fourth with approximately micromolar affinity. May be involved in receiving and then transporting lanthanides (such as La(3+), Nd(3+) and Sm(3+)) to a specific periplasmic destination. This Methylorubrum extorquens (strain ATCC 14718 / DSM 1338 / JCM 2805 / NCIMB 9133 / AM1) (Methylobacterium extorquens) protein is Lanmodulin.